Consider the following 84-residue polypeptide: Transmembrane protein EP84R (84 aa).

2 helical membrane-spanning segments follow: residues 31-51 (VIGV…IIIL) and 60-80 (AASI…FLIY).

It belongs to the asfivirus EP84R family.

The protein localises to the virion membrane. This is Transmembrane protein EP84R from Ornithodoros (relapsing fever ticks).